We begin with the raw amino-acid sequence, 359 residues long: Mitochondrial calcium uniporter regulator 1 (359 aa).

Residues 1–68 (MDCGSVGGQR…ARGGVSRASP (68 aa)) are Mitochondrial intermembrane-facing. A helical membrane pass occupies residues 69–85 (LLLLLLVPSPRLAAAAP). Over 86-338 (RRQLGDWERS…LESHKLDNIK (253 aa)) the chain is Mitochondrial matrix. Residues 235-310 (EKSEFSALRA…VALHAQQDRA (76 aa)) are a coiled coil. A helical transmembrane segment spans residues 339–358 (YLAGSIFTCLTVALGFYRLW). A topological domain (mitochondrial intermembrane) is located at residue isoleucine 359.

The protein belongs to the CCDC90 family. In terms of assembly, interacts (via coiled coil regions) with MCU; the interaction is direct. Interacts with SMDT1/EMRE; the interaction is direct. Interacts with PPIF. In terms of tissue distribution, ubiquitously expressed.

The protein localises to the mitochondrion inner membrane. Key regulator of mitochondrial calcium uniporter (MCU) required for calcium entry into mitochondrion. Plays a direct role in uniporter-mediated calcium uptake via a direct interaction with MCU. Probably involved in the assembly of the membrane components of the uniporter complex (uniplex). The chain is Mitochondrial calcium uniporter regulator 1 from Homo sapiens (Human).